A 462-amino-acid chain; its full sequence is F-box/LRR-repeat protein At5g38396 (462 aa).

The F-box domain occupies 1-47 (MDLLRNIPDELICHILSFLTTKEAALTSVLSKRWRNLLAFVSNLHID). LRR repeat units follow at residues 118–146 (SIDL…KLHR), 148–175 (CIGQ…ELDY), 197–222 (VDAF…TMSS), 302–333 (CLDL…SIKS), and 334–359 (AENR…VLEG).

This Arabidopsis thaliana (Mouse-ear cress) protein is F-box/LRR-repeat protein At5g38396.